The following is a 455-amino-acid chain: uncharacterized protein (455 aa).

This is an uncharacterized protein from Acanthamoeba polyphaga (Amoeba).